A 410-amino-acid polypeptide reads, in one-letter code: Peptidase T (410 aa).

Zn(2+) is bound at residue H79. The active site involves D81. Position 142 (D142) interacts with Zn(2+). E176 acts as the Proton acceptor in catalysis. E177, D199, and H381 together coordinate Zn(2+).

Belongs to the peptidase M20B family. Zn(2+) serves as cofactor.

The protein resides in the cytoplasm. It carries out the reaction Release of the N-terminal residue from a tripeptide.. Functionally, cleaves the N-terminal amino acid of tripeptides. The sequence is that of Peptidase T from Listeria monocytogenes serotype 4a (strain HCC23).